The following is a 254-amino-acid chain: MAGILSKPNYNQFLESLIKLLAQTSGKDKIAKILQYGAKLLGYIFLKRSKHWVDVMKKLETTSGSARKVWRLGNTLAEQQKILALFKVKNPFAFLNILALIRQSGMYFYWVFDHLILGTNIGLCKFDTVKLGWYSSVSWFFGLLCSIIIDLNTLAIMLKKEKSLRLTITQNKINANNNNIDTHTITSEVENKAIIDQFNEVIKKKNEIYLNCAKNGSDLIIASTLLKIYPFSQGTIGISGIISALIGAYQMWPK.

Topologically, residues 1–91 (MAGILSKPNY…ILALFKVKNP (91 aa)) are cytoplasmic. A helical membrane pass occupies residues 92-112 (FAFLNILALIRQSGMYFYWVF). Residues 113–227 (DHLILGTNIG…DLIIASTLLK (115 aa)) are Lumenal-facing. Residues 228 to 248 (IYPFSQGTIGISGIISALIGA) form a helical membrane-spanning segment. Residues 249–254 (YQMWPK) lie on the Cytoplasmic side of the membrane.

This sequence belongs to the peroxin-11 family.

The protein resides in the peroxisome membrane. Involved in peroxisomal proliferation. Could participate in peroxisomal elongation or fission. May be involved in parceling of peroxisomes into regular quanta. This chain is Peroxisomal membrane protein 11 homolog (pex11), found in Dictyostelium discoideum (Social amoeba).